The primary structure comprises 76 residues: Small ribosomal subunit protein uS17 (76 aa).

Belongs to the universal ribosomal protein uS17 family. Part of the 30S ribosomal subunit.

Its function is as follows. One of the primary rRNA binding proteins, it binds specifically to the 5'-end of 16S ribosomal RNA. In Ruegeria sp. (strain TM1040) (Silicibacter sp.), this protein is Small ribosomal subunit protein uS17.